The sequence spans 117 residues: Large ribosomal subunit protein bL20c (117 aa).

Belongs to the bacterial ribosomal protein bL20 family.

The protein localises to the plastid. It is found in the chloroplast. Binds directly to 23S ribosomal RNA and is necessary for the in vitro assembly process of the 50S ribosomal subunit. It is not involved in the protein synthesizing functions of that subunit. In Platanus occidentalis (Sycamore), this protein is Large ribosomal subunit protein bL20c.